We begin with the raw amino-acid sequence, 445 residues long: C4-dicarboxylate transport protein (445 aa).

8 helical membrane passes run 24-44 (VLYV…WLSP), 62-82 (LIKM…IAHI), 105-125 (FALV…GLAA), 163-183 (GDIL…MALG), 201-221 (FGVI…AMAF), 234-254 (LIGL…LVLG), 322-342 (IYMT…LSFG), and 370-390 (AGTL…VFSI).

The protein belongs to the dicarboxylate/amino acid:cation symporter (DAACS) (TC 2.A.23) family.

The protein localises to the cell inner membrane. In terms of biological role, responsible for the transport of dicarboxylates such as succinate, fumarate, and malate from the periplasm across the membrane. The sequence is that of C4-dicarboxylate transport protein from Rhodopseudomonas palustris (strain ATCC BAA-98 / CGA009).